Reading from the N-terminus, the 580-residue chain is E3 ubiquitin-protein ligase TRIM45 (580 aa).

Residues 29 to 98 (CPLCMGLFKA…QIGILCPVCD (70 aa)) form an RING-type zinc finger. B box-type zinc fingers lie at residues 130–176 (GQGL…MVDL) and 186–227 (GKPI…CDFT). Zn(2+) is bound by residues Cys-135, Cys-138, Cys-158, His-162, Cys-191, His-194, Cys-214, and His-219. Residues 281-335 (SEGYIKAIEEHRDKLLKQLEDIRVQKENSLQLQKAQLEQLLADMRTGVEFTEHLL) adopt a coiled-coil conformation. The Filamin repeat unit spans residues 394–497 (TKEVDPAKCV…VQGSPFTVTV (104 aa)).

The protein belongs to the TRIM/RBCC family.

The protein localises to the cytoplasm. The protein resides in the nucleus. The enzyme catalyses S-ubiquitinyl-[E2 ubiquitin-conjugating enzyme]-L-cysteine + [acceptor protein]-L-lysine = [E2 ubiquitin-conjugating enzyme]-L-cysteine + N(6)-ubiquitinyl-[acceptor protein]-L-lysine.. Its function is as follows. E3 ubiquitin-protein ligase that plays a role in the regulation of inflammatory response. Mechanistically, mediates the 'Lys-48'-linked polyubiquitination of TAB2, a regulatory protein of the kinase TAK1, leading to its degradation via the proteasomal pathway and inhibition of the TLR-mediated inflammatory immune response. May act as a transcriptional repressor in mitogen-activated protein kinase signaling pathway. The sequence is that of E3 ubiquitin-protein ligase TRIM45 (TRIM45) from Bos taurus (Bovine).